The chain runs to 571 residues: CDT1-like protein a, chloroplastic (571 aa).

Residues 1 to 79 (MSTPGSSRSI…GSRRRSEDPV (79 aa)) constitute a chloroplast transit peptide. Disordered stretches follow at residues 1–110 (MSTP…EKEK) and 288–315 (TTSS…TPAK). Residues 22 to 38 (SPSSKSQTGNPNPSSVA) are compositionally biased toward polar residues. Residues 81-96 (SSAKSRLFFDSSSSSP) are compositionally biased toward low complexity. Over residues 288 to 302 (TTSSLAKPTSSQINI) the composition is skewed to polar residues. Positions 303-315 (APTPTKPTSTPAK) are enriched in low complexity.

The protein belongs to the Cdt1 family. Binds to ARC6. In terms of processing, phosphorylated by cyclin D- and cyclin A-containing CDKA-1, and thus targeted to proteasome-mediated proteolysis. In terms of tissue distribution, expressed in proliferating (e.g. shoot and root apical meristems, organ primordia) and endoreplicating cells (e.g. guard cells and stomatal lineage, developing trichomes).

The protein localises to the plastid. It localises to the chloroplast. In terms of biological role, member of the pre-replication complex. Component of the plastid division machinery. Promotes polyloidization and regulates endoreduplication. Involved in the coordination of cell and plastid division. In Arabidopsis thaliana (Mouse-ear cress), this protein is CDT1-like protein a, chloroplastic (CDT1A).